The chain runs to 387 residues: MALVFKSIGAHKTPPCTLNLASPALYHTRVTMASTITHPPPLKDRKISSTRRVRTYPLAPEKAEIFNSMHGWVEDTILPFLKPVEESWQPTDFLPDSTSDGFHEQVEELRKRTADLPDDYLVALVGAMVTEEALPTYQTMLNTTDVIYDESGASPVPWAVWTRAWTAEENRHGDIVNKYLYLSGRVDMKQIEKTIQYLIGSGMDPGADNNPYLAYIYTSYQERATAISHGSLGRLARQKGEMKLAQICGTISADEKRHEAAYSKIVEKLFELDPEGTMLALAYMMKMKIVMPARLMHDGKDPDMFQHFSAVSQRLGIYTAKEYTDILEHMIARWGVDKLTGLSGEGRRAQDYVCGLPMRFRKVEERAQAWAENISHVPFSWIFGRRV.

The N-terminal 29 residues, 1-29 (MALVFKSIGAHKTPPCTLNLASPALYHTR), are a transit peptide targeting the chloroplast. Fe cation contacts are provided by Glu131, Glu169, His172, Glu222, Glu255, and His258.

It belongs to the fatty acid desaturase type 2 family. Fe(2+) serves as cofactor.

Its subcellular location is the plastid. It is found in the chloroplast. It catalyses the reaction hexadecanoyl-[ACP] + 2 reduced [2Fe-2S]-[ferredoxin] + O2 + 2 H(+) = (6Z)-hexadecenoyl-[ACP] + 2 oxidized [2Fe-2S]-[ferredoxin] + 2 H2O. Its pathway is lipid metabolism; fatty acid metabolism. Its activity is regulated as follows. Inhibited by KCN or H(2)O(2). Its function is as follows. Delta(6) fatty acid desaturase introducing a cis double bond at carbon 6 of palmitoyl-[acyl-carrier protein](16:0-ACP), producing 16:1(6Z)-ACP. No activity with the coenzyme A ester of the fatty acid. The position of the double bond is determined by its distance from the carboxyl end of the fatty acid. Low activity with several saturated acyl-[acyl-carrier protein]s, including 14:0-ACP and 18:0-ACP. Requires reduced ferredoxin for detectable in vitro activity. This chain is Acyl-[acyl-carrier-protein] 6-desaturase, found in Thunbergia alata (Black-eyed Susan vine).